A 135-amino-acid polypeptide reads, in one-letter code: MYILNDILNLHRNIILKFNVGRRLRKLVGWSAVRVVLVLIGATIILVVISVLVVSTLAASSSVSSVSPIISTPTTEASRVKSWSGRSLSKGVNVQHFFFLPSHIGISFSRSGDGVEKRRFFIIKLLIRFILLVNS.

The chain crosses the membrane as a helical span at residues Val35 to Ser55.

It localises to the membrane. This is an uncharacterized protein from Saccharomyces cerevisiae (strain ATCC 204508 / S288c) (Baker's yeast).